A 286-amino-acid chain; its full sequence is 33 kDa chaperonin (286 aa).

Disulfide bonds link C225/C227 and C258/C261.

This sequence belongs to the HSP33 family. In terms of processing, under oxidizing conditions two disulfide bonds are formed involving the reactive cysteines. Under reducing conditions zinc is bound to the reactive cysteines and the protein is inactive.

The protein resides in the cytoplasm. Its function is as follows. Redox regulated molecular chaperone. Protects both thermally unfolding and oxidatively damaged proteins from irreversible aggregation. Plays an important role in the bacterial defense system toward oxidative stress. The protein is 33 kDa chaperonin of Shewanella baltica (strain OS223).